Reading from the N-terminus, the 979-residue chain is SGGFDFSFLPQPPQEKAGVGLGPGPMGLMGPRGPPGASGAPGPQGFGARGPAGPPGKAGEDGRPGERGVVGPQGARGFPGTPGLPGFKGIGLDGLKGQPGAPGVKGEPGAPGENGTGARGLPGERGRVGAPGPAGARGSDGSVGPVGPAGPIGSAGPPGFPGAPGPKGEGPVGNTGPSGPAGPRGEQGLPGVSGPVGPPGNPGANGLTGKGAAGLPGVAGAPGLPGPRGIPGPVGASGATGARGLVGEPGPAGSKGESGGKGEPGSAGPQGPPGSSGEEGKRGPNGEAGSTGPTGPPGLRGGPGSRGLPGADGRAGVIGPAGRGASGPAGVRGPSGDTGRPGEPGLMGARGLPGSPGNVGPAGKEGPVGLPGIDGRPGPIGPAGRGEAGNIGFPGPKGPAGDPGKKGHAGLAGNRGAPGPDGNNGAQGPPGLQGVQGGKGEQGPAGPPGFQGLPGPAGTTGEVGKPGERGIPGEFGLPGPAGPRGERGPPGESGAVGPSGAIGSRGPSGPPGPDGNKGEPGVVGAPGTAGPAGSGGPGERGAAGIPGGKGEKGETGLRGEVGTTGRDGARGAPGAVGAPGPAGEAGAAGPAGPAGPRGSPGERGEVGPAGPNGFAGPAGAAGQPGAKGERGTKGPKGENGIVGPTGPVGSAGPAGPNGPAGPAGSRGDGGPPGVTGFPGAAGRTGPPGPSGITGPPGPPGAAGKEGLRGPRGDQGPVGRTGETGAGGPPGFTGEKGPSGEPGTAGPPGTAGPQGLLGAPGILGLPGSRGERGLPGVAGAVGEPGPLGIGPPGARGPSGGDGLPGHKGERGYAGNAGPVGAAGAPGPHGSVGPAGKHGNRGEPGPVGSVGPVGALGPRGPSGPQGIRGDKGEPGDKGPRGLPGLKGHNGLQGLPGLAGQHGDQGSPGPVGPAGPRGPAGPSGPPGKDGRTGHPGAVGPAGIRGSQGSQGPSGPGPPGPPGPPGASGGGYDFGYEGDFYRA.

The interval 1 to 979 (SGGFDFSFLP…FGYEGDFYRA (979 aa)) is disordered. 4-hydroxyproline occurs at positions 10, 13, 35, and 41. The segment covering 28–41 (LMGPRGPPGASGAP) has biased composition (low complexity). Lys88 carries the post-translational modification 5-hydroxylysine; alternate. O-linked (Gal...) hydroxylysine; alternate glycosylation is present at Lys88. Over residues 128 to 157 (VGAPGPAGARGSDGSVGPVGPAGPIGSAGP) the composition is skewed to low complexity. The span at 256 to 265 (GESGGKGEPG) shows a compositional bias: gly residues. Low complexity predominate over residues 266–276 (SAGPQGPPGSS). The span at 298-307 (GLRGGPGSRG) shows a compositional bias: gly residues. 4-hydroxyproline is present on residues Pro341 and Pro344. Residues 434-443 (GVQGGKGEQG) show a composition bias toward gly residues. Low complexity-rich tracts occupy residues 490 to 507 (PGES…SRGP) and 519 to 529 (EPGVVGAPGTA). Gly residues predominate over residues 530 to 548 (GPAGSGGPGERGAAGIPGG). Composition is skewed to low complexity over residues 570-599 (RGAP…PRGS) and 606-626 (VGPA…QPGA). Positions 627–636 (KGERGTKGPK) are enriched in basic and acidic residues. Positions 644 to 654 (PTGPVGSAGPA) are enriched in low complexity. Residues 664–673 (GSRGDGGPPG) are compositionally biased toward gly residues. The span at 675–684 (TGFPGAAGRT) shows a compositional bias: low complexity. Residues 721 to 730 (GETGAGGPPG) show a composition bias toward gly residues. 2 stretches are compositionally biased toward low complexity: residues 738-765 (SGEP…LGLP) and 773-783 (LPGVAGAVGEP). Residues 784–802 (GPLGIGPPGARGPSGGDGL) show a composition bias toward gly residues. 2 stretches are compositionally biased toward low complexity: residues 811 to 833 (YAGN…VGPA) and 841 to 856 (EPGP…ALGP). Residues 866–877 (RGDKGEPGDKGP) show a composition bias toward basic and acidic residues. The span at 951 to 961 (GPGPPGPPGPP) shows a compositional bias: pro residues.

It belongs to the fibrillar collagen family. Trimers of one alpha 2(I) and two alpha 1(I) chains. Interacts (via C-terminus) with TMEM131 (via PapD-L domain); the interaction is direct and is involved in assembly and TRAPPIII ER-to-Golgi transport complex-dependent secretion of collagen. Prolines at the third position of the tripeptide repeating unit (G-X-Y) are hydroxylated in some or all of the chains. As to expression, expressed in bones.

The protein localises to the secreted. It localises to the extracellular space. Its subcellular location is the extracellular matrix. Its function is as follows. Type I collagen is a member of group I collagen (fibrillar forming collagen). The protein is Collagen alpha-2(I) chain of Neocnus dousman (Slow ground sloth).